We begin with the raw amino-acid sequence, 101 residues long: Ribonuclease kappa-B (101 aa).

Transmembrane regions (helical) follow at residues 13–33 and 68–88; these read ACGIVLSVWGVIMLVLLGVFF and VSYNCFIAAAIYIVLGGFSFC.

It belongs to the RNase K family.

The protein localises to the membrane. Functionally, endoribonuclease which preferentially cleaves ApU and ApG phosphodiester bonds. This chain is Ribonuclease kappa-B (rnasek-b), found in Xenopus laevis (African clawed frog).